A 312-amino-acid polypeptide reads, in one-letter code: D-apiose import binding protein (312 aa).

The first 26 residues, 1–26 (MKASKRWVALAAATLTLFTATGTAQA), serve as a signal peptide directing secretion. Residues asparagine 39, 115–116 (DR), 162–164 (DIN), arginine 168, asparagine 218, aspartate 243, and glutamine 263 contribute to the D-apiofuranose site.

This sequence belongs to the bacterial solute-binding protein 2 family.

The protein localises to the periplasm. Its function is as follows. Part of an ABC transporter complex involved in D-apiose import. Binds D-apiose, D-ribose and D-ribulose. The sequence is that of D-apiose import binding protein from Paraburkholderia graminis (strain ATCC 700544 / DSM 17151 / LMG 18924 / NCIMB 13744 / C4D1M).